A 627-amino-acid chain; its full sequence is Carene synthase 3, chloroplastic (627 aa).

The transit peptide at 1-36 (MSVISIVPLASKSCLYKSLMSSTHELKALCRPIATL) directs the protein to the chloroplast. Mg(2+) is bound by residues Asp378, Asp382, and Asp530. Positions 378–382 (DDMYD) match the DDXXD motif motif.

This sequence belongs to the terpene synthase family. Tpsd subfamily. Requires Mg(2+) as cofactor. The cofactor is Mn(2+).

It localises to the plastid. The protein localises to the chloroplast. The enzyme catalyses (2E)-geranyl diphosphate = (+)-car-3-ene + diphosphate. It participates in terpene metabolism; oleoresin biosynthesis. In terms of biological role, terpene synthase (TPS) involved in defensive oleoresin formation in conifers in response to insect attack or other injury. This is Carene synthase 3, chloroplastic (TPS-3car3) from Picea sitchensis (Sitka spruce).